The following is a 670-amino-acid chain: Neutral ceramidase (670 aa).

Residues 1-24 (MSRSAFTALLLSCVLLALSMPARA) form the signal peptide. Mg(2+) is bound at residue histidine 61. Positions 84, 92, and 111 each coordinate substrate. Histidine 121 contacts Zn(2+). Serine 130 contacts substrate. Histidine 228 contributes to the Zn(2+) binding site. The Nucleophile role is filled by serine 274. Cysteine 346 and cysteine 394 form a disulfide bridge. Glutamate 435 is a binding site for Zn(2+). Tyrosine 469 serves as a coordination point for substrate. Tyrosine 472 provides a ligand contact to Zn(2+). Aspartate 603, aspartate 605, and threonine 608 together coordinate Mg(2+). The required for correct folding and localization stretch occupies residues 644-670 (NAKNFWTQKISEIGGSTRSFEVLGTTP).

It belongs to the neutral ceramidase family. As to quaternary structure, homodimer. It depends on Zn(2+) as a cofactor. Mg(2+) serves as cofactor.

Its subcellular location is the secreted. It catalyses the reaction an N-acylsphing-4-enine + H2O = sphing-4-enine + a fatty acid. Inhibited by EDTA, EGTA and D/L-sphinganine D-erythro-sphingosine. L-erythro-sphingosine is a less powerful inhibitor. Stimulated by glycerophospholipids: cardiolipin is the most effective, followed by phosphatidic acid, phosphatidylethanolamine and phosphatidylglycerol, whereas phosphatidylcholine, lysophosphatidic acid and diacylglycerol are less effective. Its function is as follows. Catalyzes the cleavage of the N-acyl linkage of the ceramides (Cers) to yield sphingosine (Sph) and free fatty acid at an optimal pH of 8-9. Also catalyzes the synthesis of Cers from Sph and fatty acid. This is Neutral ceramidase from Pseudomonas aeruginosa (strain ATCC 15692 / DSM 22644 / CIP 104116 / JCM 14847 / LMG 12228 / 1C / PRS 101 / PAO1).